A 754-amino-acid chain; its full sequence is Deadenylation-dependent mRNA-decapping factor pdc2 (754 aa).

Positions 499-754 (LESIWKALYI…MGLDARQLSA (256 aa)) are interaction with lsm1.

Belongs to the PAT1 family. Interacts with dcp2. Interacts with lsm1; via C-terminus.

The protein localises to the cytoplasm. Its subcellular location is the nucleus. The protein resides in the P-body. Functionally, activator of decapping that functions as a general and active mechanism of translational repression and required for P-body formation. Stabilizes the 3' terminus of mRNAs and modulates the rates of mRNA-decapping that occur following deadenylation. Might be required for promoting the formation or the stabilization of the preinitiation translation complexes. Necessary for accurate chromosome transmission during cell division. Together with lsm1, recruits the deadenylase ccr4 to P-bodies. The chain is Deadenylation-dependent mRNA-decapping factor pdc2 from Schizosaccharomyces pombe (strain 972 / ATCC 24843) (Fission yeast).